The following is a 297-amino-acid chain: 4-hydroxy-tetrahydrodipicolinate synthase (297 aa).

Residue T47 participates in pyruvate binding. Y136 functions as the Proton donor/acceptor in the catalytic mechanism. K165 serves as the catalytic Schiff-base intermediate with substrate. I206 provides a ligand contact to pyruvate.

This sequence belongs to the DapA family. In terms of assembly, homotetramer; dimer of dimers.

The protein localises to the cytoplasm. The catalysed reaction is L-aspartate 4-semialdehyde + pyruvate = (2S,4S)-4-hydroxy-2,3,4,5-tetrahydrodipicolinate + H2O + H(+). Its pathway is amino-acid biosynthesis; L-lysine biosynthesis via DAP pathway; (S)-tetrahydrodipicolinate from L-aspartate: step 3/4. Functionally, catalyzes the condensation of (S)-aspartate-beta-semialdehyde [(S)-ASA] and pyruvate to 4-hydroxy-tetrahydrodipicolinate (HTPA). The protein is 4-hydroxy-tetrahydrodipicolinate synthase of Campylobacter fetus subsp. fetus (strain 82-40).